The chain runs to 1158 residues: Adipocyte enhancer-binding protein 1 (1158 aa).

Residues 1–25 (MAAVRGAPLLSCLLALLALCPGGRP) form the signal peptide. The interval 41–387 (FLSELEPEPR…TPTEKVKCPP (347 aa)) is disordered. Over residues 45 to 55 (LEPEPREDDVE) the composition is skewed to acidic residues. The span at 100–110 (DKGPKVPKESL) shows a compositional bias: basic and acidic residues. The segment covering 116–166 (PPKKGKEKPPKATKKPKEKPPKATKKPKEKPPKATKKPKEKPPKATKKPPS) has biased composition (basic residues). Pro residues predominate over residues 182 to 192 (PLPPPPSPGPE). Over residues 193–202 (ELPQEGGAPL) the composition is skewed to low complexity. The segment covering 211-223 (EETHVEAREHQPE) has biased composition (basic and acidic residues). Residues 252 to 266 (RQKQPRPPPSRRRRP) are compositionally biased toward basic residues. Residues 267–289 (ERVWPEPPEEKAPAPAPEERIEP) show a composition bias toward basic and acidic residues. Over residues 290–300 (PVKPLLPPLPP) the composition is skewed to pro residues. Residues 326–371 (PDAERQTDEEKEELKKPKKEDSSPKEETDKWAVEKGKDHKEPRKGE) show a composition bias toward basic and acidic residues. Residues 383 to 540 (VKCPPIGMES…LCMRLEVLGC (158 aa)) form the F5/8 type C domain. A required for DNA-binding and interaction with NFKBIA region spans residues 390-555 (MESHRIEDNQ…YSYYAQNEVV (166 aa)). The interaction with MAPK1 and MAPK3 stretch occupies residues 421-624 (TGATEDDYYD…EPEFRYTAGI (204 aa)). N-linked (GlcNAc...) asparagine glycosylation occurs at Asn-528. The interval 555-985 (VATDDLDFRH…TQCNFILARS (431 aa)) is interaction with PTEN. Residues 563–904 (RHHSYKDMRQ…EALLTFMEQV (342 aa)) form the Peptidase M14 domain. Asn-922 is a glycosylation site (N-linked (GlcNAc...) asparagine). A required for transcriptional repression region spans residues 941–1158 (DYWRILNPGE…ETYTVNFGDF (218 aa)). The segment at 1006–1158 (DPSRPMTPQQ…ETYTVNFGDF (153 aa)) is interaction with MAPK1 and MAPK3. Residues 1108 to 1137 (EFETQLEPEFETQLEPEFEEEEEEEKEEEI) show a composition bias toward acidic residues. The segment at 1108–1141 (EFETQLEPEFETQLEPEFEEEEEEEKEEEIATGQ) is disordered.

Belongs to the peptidase M14 family. In terms of assembly, isoform 1: Interacts with different types of collagen, including collagens I, III, and V. Isoform 2: Interacts with GNG5, NFKBIA, MAPK1, MAPK3 and PTEN. Interaction with MAPK1 may stimulate DNA-binding. May interact with calmodulin. Binds to DNA in vitro. Post-translationally, phosphorylated by MAPK1 in vitro. Expressed in osteoblast and visceral fat.

It localises to the secreted. It is found in the cytoplasm. The protein resides in the nucleus. Functionally, as a positive regulator of collagen fibrillogenesis, it is probably involved in the organization and remodeling of the extracellular matrix. Its function is as follows. May positively regulate MAP-kinase activity in adipocytes, leading to enhanced adipocyte proliferation and reduced adipocyte differentiation. May also positively regulate NF-kappa-B activity in macrophages by promoting the phosphorylation and subsequent degradation of I-kappa-B-alpha (NFKBIA), leading to enhanced macrophage inflammatory responsiveness. Can act as a transcriptional repressor. This chain is Adipocyte enhancer-binding protein 1 (AEBP1), found in Homo sapiens (Human).